Here is a 149-residue protein sequence, read N- to C-terminus: D-aminoacyl-tRNA deacylase (149 aa).

The short motif at 137–138 (GP) is the Gly-cisPro motif, important for rejection of L-amino acids element.

It belongs to the DTD family. Homodimer.

It is found in the cytoplasm. It catalyses the reaction glycyl-tRNA(Ala) + H2O = tRNA(Ala) + glycine + H(+). It carries out the reaction a D-aminoacyl-tRNA + H2O = a tRNA + a D-alpha-amino acid + H(+). Functionally, an aminoacyl-tRNA editing enzyme that deacylates mischarged D-aminoacyl-tRNAs. Also deacylates mischarged glycyl-tRNA(Ala), protecting cells against glycine mischarging by AlaRS. Acts via tRNA-based rather than protein-based catalysis; rejects L-amino acids rather than detecting D-amino acids in the active site. By recycling D-aminoacyl-tRNA to D-amino acids and free tRNA molecules, this enzyme counteracts the toxicity associated with the formation of D-aminoacyl-tRNA entities in vivo and helps enforce protein L-homochirality. The protein is D-aminoacyl-tRNA deacylase of Thermoanaerobacter pseudethanolicus (strain ATCC 33223 / 39E) (Clostridium thermohydrosulfuricum).